The following is a 401-amino-acid chain: Aspartokinase (401 aa).

This sequence belongs to the aspartokinase family.

It carries out the reaction L-aspartate + ATP = 4-phospho-L-aspartate + ADP. The protein operates within amino-acid biosynthesis; L-lysine biosynthesis via DAP pathway; (S)-tetrahydrodipicolinate from L-aspartate: step 1/4. It participates in amino-acid biosynthesis; L-methionine biosynthesis via de novo pathway; L-homoserine from L-aspartate: step 1/3. Its pathway is amino-acid biosynthesis; L-threonine biosynthesis; L-threonine from L-aspartate: step 1/5. The polypeptide is Aspartokinase (lysC) (Rickettsia felis (strain ATCC VR-1525 / URRWXCal2) (Rickettsia azadi)).